A 209-amino-acid chain; its full sequence is Putative thymidylate synthase (209 aa).

The active site involves cysteine 137.

The protein belongs to the thymidylate synthase family. Archaeal-type ThyA subfamily. As to quaternary structure, monomer.

The protein localises to the cytoplasm. It participates in pyrimidine metabolism; dTTP biosynthesis. May catalyze the biosynthesis of dTMP using an unknown cosubstrate. The chain is Putative thymidylate synthase from Methanopyrus kandleri (strain AV19 / DSM 6324 / JCM 9639 / NBRC 100938).